We begin with the raw amino-acid sequence, 332 residues long: Aspartate carbamoyltransferase catalytic subunit (332 aa).

Arg-54 and Thr-55 together coordinate carbamoyl phosphate. Residue Lys-82 coordinates L-aspartate. Residues Arg-104, His-134, and Gln-137 each contribute to the carbamoyl phosphate site. L-aspartate contacts are provided by Arg-175 and Arg-230. Residues Gly-271 and Pro-272 each coordinate carbamoyl phosphate. Positions 312 to 332 (GGPDGDSTTSPGSGPEGGTTP) are disordered.

It belongs to the aspartate/ornithine carbamoyltransferase superfamily. ATCase family. In terms of assembly, heterododecamer (2C3:3R2) of six catalytic PyrB chains organized as two trimers (C3), and six regulatory PyrI chains organized as three dimers (R2).

The enzyme catalyses carbamoyl phosphate + L-aspartate = N-carbamoyl-L-aspartate + phosphate + H(+). The protein operates within pyrimidine metabolism; UMP biosynthesis via de novo pathway; (S)-dihydroorotate from bicarbonate: step 2/3. In terms of biological role, catalyzes the condensation of carbamoyl phosphate and aspartate to form carbamoyl aspartate and inorganic phosphate, the committed step in the de novo pyrimidine nucleotide biosynthesis pathway. The polypeptide is Aspartate carbamoyltransferase catalytic subunit (Beutenbergia cavernae (strain ATCC BAA-8 / DSM 12333 / CCUG 43141 / JCM 11478 / NBRC 16432 / NCIMB 13614 / HKI 0122)).